Here is a 547-residue protein sequence, read N- to C-terminus: MAAKDIVYREDARTAMERGVNALADAVRVTLGPKGRNVVLEKKFGSPMIVNDGVTIAREIELENPFENMGAQLVKEVATKTNDIAGDGTTTAAVLAQAIVRAGLKNVTAGANPMILKRGIEKAVERTVEEIKSRAKPVESKEAITQVASISANDTTIGNLIADAMEKVGKDGVITVEESKGMGTSLEVVDGMNFDRGYISPYMITDPDKMEATLADPYILITDKKISAVADILPILEKVLQAGKALLIIAEDVEGEALATLVVNKLRGTLNVVAVKAPGFGDRRKAMLEDIAILTGGRVVSEEVGLKLDKAGLDLLGKARQVRVKKDETIVVDGQGDADAITKRLAQIKKQIEDTTSDFDREKLQERLAKLAGGVAVINVGAATETEMKEKKLRIEDALNATRAAVEEGIVPGGGTVYVNVIPVLNGLEPELPDERTGVDIIKRALEAPLRQIANNAGVEGSIVVEKVKESPAGVGFDALSEQYTDMIGAGIVDPAKVTRIALQNAASIAAMILTTETLVAEKVDKDKKGGMGGMGGMGGMGGMDMM.

Residues 30-33 (TLGP), 87-91 (DGTTT), Gly-414, 478-480 (DAL), and Asp-494 contribute to the ATP site.

Belongs to the chaperonin (HSP60) family. Forms a cylinder of 14 subunits composed of two heptameric rings stacked back-to-back. Interacts with the co-chaperonin GroES.

The protein resides in the cytoplasm. The enzyme catalyses ATP + H2O + a folded polypeptide = ADP + phosphate + an unfolded polypeptide.. Its function is as follows. Together with its co-chaperonin GroES, plays an essential role in assisting protein folding. The GroEL-GroES system forms a nano-cage that allows encapsulation of the non-native substrate proteins and provides a physical environment optimized to promote and accelerate protein folding. The polypeptide is Chaperonin GroEL (Desulforudis audaxviator (strain MP104C)).